We begin with the raw amino-acid sequence, 95 residues long: Aspartyl/glutamyl-tRNA(Asn/Gln) amidotransferase subunit C (95 aa).

It belongs to the GatC family. As to quaternary structure, heterotrimer of A, B and C subunits.

It carries out the reaction L-glutamyl-tRNA(Gln) + L-glutamine + ATP + H2O = L-glutaminyl-tRNA(Gln) + L-glutamate + ADP + phosphate + H(+). The enzyme catalyses L-aspartyl-tRNA(Asn) + L-glutamine + ATP + H2O = L-asparaginyl-tRNA(Asn) + L-glutamate + ADP + phosphate + 2 H(+). Functionally, allows the formation of correctly charged Asn-tRNA(Asn) or Gln-tRNA(Gln) through the transamidation of misacylated Asp-tRNA(Asn) or Glu-tRNA(Gln) in organisms which lack either or both of asparaginyl-tRNA or glutaminyl-tRNA synthetases. The reaction takes place in the presence of glutamine and ATP through an activated phospho-Asp-tRNA(Asn) or phospho-Glu-tRNA(Gln). The polypeptide is Aspartyl/glutamyl-tRNA(Asn/Gln) amidotransferase subunit C (Chromohalobacter salexigens (strain ATCC BAA-138 / DSM 3043 / CIP 106854 / NCIMB 13768 / 1H11)).